Consider the following 124-residue polypeptide: Large ribosomal subunit protein bL12 (124 aa).

It belongs to the bacterial ribosomal protein bL12 family. In terms of assembly, homodimer. Part of the ribosomal stalk of the 50S ribosomal subunit. Forms a multimeric L10(L12)X complex, where L10 forms an elongated spine to which 2 to 4 L12 dimers bind in a sequential fashion. Binds GTP-bound translation factors.

Functionally, forms part of the ribosomal stalk which helps the ribosome interact with GTP-bound translation factors. Is thus essential for accurate translation. In Burkholderia thailandensis (strain ATCC 700388 / DSM 13276 / CCUG 48851 / CIP 106301 / E264), this protein is Large ribosomal subunit protein bL12.